A 370-amino-acid chain; its full sequence is Aminomethyltransferase (370 aa).

It belongs to the GcvT family. As to quaternary structure, the glycine cleavage system is composed of four proteins: P, T, L and H.

It catalyses the reaction N(6)-[(R)-S(8)-aminomethyldihydrolipoyl]-L-lysyl-[protein] + (6S)-5,6,7,8-tetrahydrofolate = N(6)-[(R)-dihydrolipoyl]-L-lysyl-[protein] + (6R)-5,10-methylene-5,6,7,8-tetrahydrofolate + NH4(+). In terms of biological role, the glycine cleavage system catalyzes the degradation of glycine. This is Aminomethyltransferase from Stenotrophomonas maltophilia (strain K279a).